The chain runs to 348 residues: 4-hydroxy-2-oxovalerate aldolase (348 aa).

Residues isoleucine 9–glutamine 261 form the Pyruvate carboxyltransferase domain. Residue arginine 17 to aspartate 18 participates in substrate binding. A Mn(2+)-binding site is contributed by aspartate 18. Catalysis depends on histidine 21, which acts as the Proton acceptor. Substrate-binding residues include serine 171 and histidine 200. Mn(2+)-binding residues include histidine 200 and histidine 202. Tyrosine 291 is a substrate binding site.

Belongs to the 4-hydroxy-2-oxovalerate aldolase family.

The catalysed reaction is (S)-4-hydroxy-2-oxopentanoate = acetaldehyde + pyruvate. This Ralstonia pickettii (strain 12J) protein is 4-hydroxy-2-oxovalerate aldolase.